An 84-amino-acid chain; its full sequence is Conotoxin Am6.1 (84 aa).

The N-terminal stretch at 1 to 19 is a signal peptide; the sequence is MEKLTILLLVAAVLMSTHA. A propeptide spanning residues 20-47 is cleaved from the precursor; that stretch reads MFQGGGEKSRKAINFSETRKLARNKQKR. 3 disulfide bridges follow: C48–C62, C55–C66, and C61–C71. W51 bears the 6'-bromotryptophan; in Am6.1b mark. 4-carboxyglutamate; partial; in Am6.1b and Am6.1c occurs at positions 60 and 64. Residues 78 to 84 constitute a propeptide that is removed on maturation; the sequence is RTTSHPI.

It belongs to the conotoxin O2 family. In terms of processing, three forms of this peptides have been described. The unmodified Am6.1a (Am3286) is not detected in the venom; Am6.1b (Am3408) is only Trp brominated, while Am6.1c (Am3452) is both Trp brominated and Glu gamma-carboxyglutamated. Both Am6.1b and Am6.1c are detected in the venom. Expressed by the venom duct.

The protein localises to the secreted. Functionally, gamma-conotoxins may act on voltage-gated non-specific cation pacemaker channels (HCN). This Conus amadis (Amadis cone) protein is Conotoxin Am6.1.